The following is a 295-amino-acid chain: Indole-3-glycerol phosphate synthase (295 aa).

It belongs to the TrpC family.

It catalyses the reaction 1-(2-carboxyphenylamino)-1-deoxy-D-ribulose 5-phosphate + H(+) = (1S,2R)-1-C-(indol-3-yl)glycerol 3-phosphate + CO2 + H2O. The protein operates within amino-acid biosynthesis; L-tryptophan biosynthesis; L-tryptophan from chorismate: step 4/5. The polypeptide is Indole-3-glycerol phosphate synthase (Synechococcus sp. (strain ATCC 27144 / PCC 6301 / SAUG 1402/1) (Anacystis nidulans)).